The sequence spans 303 residues: Cyclin-dependent kinase 4 (303 aa).

A2 is subject to N-acetylalanine. The Protein kinase domain maps to 6 to 295 (YEPVAEIGVG…AFRALQHSYL (290 aa)). Residues 12–20 (IGVGAYGTV) and K35 each bind ATP. Positions 50–56 (PVSTVRE) are required for binding D-type cyclins. D140 functions as the Proton acceptor in the catalytic mechanism. Residue T172 is modified to Phosphothreonine; by CAK. A Phosphoserine modification is found at S300.

It belongs to the protein kinase superfamily. CMGC Ser/Thr protein kinase family. CDC2/CDKX subfamily. As to quaternary structure, component of the D-CDK4 complex, composed of CDK4 and some D-type G1 cyclin (CCND1, CCND2 or CCND3). Interacts directly in the complex with CCND1, CCND2 or CCND3. Interacts with ZNF655. Forms a ternary complex, cyclin D-CDK4-CDKN1B, involved in modulating CDK4 enzymatic activity. Interacts directly with CDKN1B (phosphorylated on 'Tyr-88' and 'Tyr-89'); the interaction allows assembly of the cyclin D-CDK4 complex, Thr-172 phosphorylation, nuclear translocation and enhances the cyclin D-CDK4 complex activity. CDK4 activity is either inhibited or enhanced depending on stoichiometry of complex. The non-tyrosine-phosphorylated form of CDKN1B prevents T-loop phosphorylation of CDK4 producing inactive CDK4. Interacts (unphosphorylated form) with CDK2. Also forms ternary complexes with CDKN1A or CDKN2A. Interacts directly with CDKN1A (via its N-terminal); the interaction promotes the assembly of the cyclin D-CDK4 complex, its nuclear translocation and promotes the cyclin D-dependent enzyme activity of CDK4. Interacts with CCND1; the interaction is prevented with the binding of CCND1 to INSM1 during cell cycle progression. Interacts with SEI1 and CCND1. Probably forms a complex composed of chaperones HSP90 and HSP70, co-chaperones CDC37, PPP5C, TSC1 and client protein TSC2, CDK4, AKT, RAF1 and NR3C1; this complex does not contain co-chaperones STIP1/HOP and PTGES3/p23. Interacts with CEBPA (when phosphorylated). Interacts with FNIP1 and FNIP2. Post-translationally, phosphorylation at Thr-172 is required for enzymatic activity. Phosphorylated, in vitro, at this site by CCNH-CDK7, but, in vivo, appears to be phosphorylated by a proline-directed kinase. In the cyclin D-CDK4-CDKN1B complex, this phosphorylation and consequent CDK4 enzyme activity, is dependent on the tyrosine phosphorylation state of CDKN1B. Thus, in proliferating cells, CDK4 within the complex is phosphorylated on Thr-172 in the T-loop. In resting cells, phosphorylation on Thr-172 is prevented by the non-tyrosine-phosphorylated form of CDKN1B.

Its subcellular location is the cytoplasm. The protein resides in the nucleus. It is found in the nucleus membrane. The enzyme catalyses L-seryl-[protein] + ATP = O-phospho-L-seryl-[protein] + ADP + H(+). It catalyses the reaction L-threonyl-[protein] + ATP = O-phospho-L-threonyl-[protein] + ADP + H(+). With respect to regulation, both phosphorylation at Thr-172 and binding of a D-type cyclin are necessary for enzymatic activity. Full activation of the cyclin-D-CDK4 complex appears to require other factors such as recruitment of the substrate via a substrate recruitment motif, and/or formation of the CDKN1B ternary complex. Inhibited by INK4 family members. In resting cells, the non-tyrosine-phosphorylated form of CDKN1B prevents phosphorylation at Thr-172 and inactivation, while, in proliferating cells, tyrosine phosphorylation of CDKN1B allows phosphorylation of Thr-172 of CDK4 and subsequent activation. Its function is as follows. Ser/Thr-kinase component of cyclin D-CDK4 (DC) complexes that phosphorylate and inhibit members of the retinoblastoma (RB) protein family including RB1 and regulate the cell-cycle during G(1)/S transition. Phosphorylation of RB1 allows dissociation of the transcription factor E2F from the RB/E2F complexes and the subsequent transcription of E2F target genes which are responsible for the progression through the G(1) phase. Hypophosphorylates RB1 in early G(1) phase. Cyclin D-CDK4 complexes are major integrators of various mitogenenic and antimitogenic signals. Also phosphorylates SMAD3 in a cell-cycle-dependent manner and represses its transcriptional activity. Component of the ternary complex, cyclin D/CDK4/CDKN1B, required for nuclear translocation and activity of the cyclin D-CDK4 complex. This is Cyclin-dependent kinase 4 (Cdk4) from Mus musculus (Mouse).